The sequence spans 311 residues: Bifunctional protein FolD (311 aa).

NADP(+) is bound by residues 184-186 (GAS), isoleucine 209, and isoleucine 250.

It belongs to the tetrahydrofolate dehydrogenase/cyclohydrolase family. In terms of assembly, homodimer.

It carries out the reaction (6R)-5,10-methylene-5,6,7,8-tetrahydrofolate + NADP(+) = (6R)-5,10-methenyltetrahydrofolate + NADPH. It catalyses the reaction (6R)-5,10-methenyltetrahydrofolate + H2O = (6R)-10-formyltetrahydrofolate + H(+). It functions in the pathway one-carbon metabolism; tetrahydrofolate interconversion. In terms of biological role, catalyzes the oxidation of 5,10-methylenetetrahydrofolate to 5,10-methenyltetrahydrofolate and then the hydrolysis of 5,10-methenyltetrahydrofolate to 10-formyltetrahydrofolate. This is Bifunctional protein FolD from Gluconacetobacter diazotrophicus (strain ATCC 49037 / DSM 5601 / CCUG 37298 / CIP 103539 / LMG 7603 / PAl5).